Here is a 1271-residue protein sequence, read N- to C-terminus: Clustered mitochondria protein homolog (1271 aa).

TPR repeat units lie at residues 104 to 138 (RHKP…ELGE) and 502 to 535 (CYGL…KPHK). Residues 329 to 580 (DQSRPQLSIL…RSTPLDIDFI (252 aa)) enclose the Clu domain. Positions 729-763 (QEEKSKIEDNEKAIEEEKKEEKTEKKEEKEEKADE) are enriched in basic and acidic residues. Residues 729-783 (QEEKSKIEDNEKAIEEEKKEEKTEKKEEKEEKADEEKSENEEDKTKPEEPSKGVF) are disordered. TPR repeat units lie at residues 1067 to 1100 (ISSY…WDFV), 1109 to 1142 (VTTL…SEKI), and 1151 to 1184 (AMIH…FSRH). The disordered stretch occupies residues 1212–1271 (QAKDKNKPKKVKAPPVPPQATTKKSKNKSKMAQTQISKLHLNSSTRFSSSSRVKPRLKKK). Residues 1241–1253 (KMAQTQISKLHLN) are compositionally biased toward polar residues. The span at 1254 to 1263 (SSTRFSSSSR) shows a compositional bias: low complexity.

Belongs to the CLU family. May associate with the eukaryotic translation initiation factor 3 (eIF-3) complex.

It localises to the cytoplasm. Its function is as follows. mRNA-binding protein involved in proper cytoplasmic distribution of mitochondria. This is Clustered mitochondria protein homolog from Meyerozyma guilliermondii (strain ATCC 6260 / CBS 566 / DSM 6381 / JCM 1539 / NBRC 10279 / NRRL Y-324) (Yeast).